Here is a 772-residue protein sequence, read N- to C-terminus: Annulin (772 aa).

2 S-palmitoyl cysteine lipidation sites follow: Cys-4 and Cys-5. Positions 15–57 (NEGSGGGIPLMPVRGGSTRRPDSLPKPPAAVVPSPPSPGDVPD) are disordered. The span at 38-53 (LPKPPAAVVPSPPSPG) shows a compositional bias: pro residues. Residues His-400 and Asp-427 contribute to the active site. The Ca(2+) site is built by Asn-467, Asp-469, Glu-517, and Glu-522.

This sequence belongs to the transglutaminase superfamily. Transglutaminase family. Ca(2+) is required as a cofactor. In terms of tissue distribution, has an annular, or ring-like expression pattern in epithelial annuli of developing limb segment boundary cells. In embryos, it is seen in gastrulating cells, in cells surrounding rapidly dividing neuroblasts, and in muscle pioneer cells invaginating to form apodemes.

It localises to the cell membrane. It catalyses the reaction L-glutaminyl-[protein] + L-lysyl-[protein] = [protein]-L-lysyl-N(6)-5-L-glutamyl-[protein] + NH4(+). Functionally, participates in morphogenetic activities of the cells, maybe by stabilizing the membrane or subcortical structures of cells that are under mechanical stress. Probably catalyzes the cross-linking of proteins and the conjugation of polyamines to proteins. The protein is Annulin of Schistocerca americana (American grasshopper).